Here is a 245-residue protein sequence, read N- to C-terminus: Outer dense fiber protein 1 (245 aa).

Phosphoserine occurs at positions 5 and 10. Copy 1 of the repeat occupies 34-38; the sequence is RCLCD. The segment at 34–78 is 2 X 5 AA repeats of [RC]-C-L-C-D; sequence RCLCDLYMHPYCCCDLHPYPYCLCYSKRSRSCGLCDLYYPCCLCD. Residue S64 is modified to Phosphoserine. Repeat unit 2 spans residues 74–78; it reads CCLCD. Phosphoserine occurs at positions 87, 108, 109, 137, 153, 175, and 180. Positions 195-233 are C-X-P repeat region; the sequence is CNPCNPCSPCSPCGPCGPCGPCGPCGPCGPCDPCNPCYP.

In terms of assembly, interacts (via leucine zipper motif) with TCP11. Interacts with SPAG4. Interacts with KLC3. Interacts with CCDC42. Testis. Specifically located to the round spermatid layer and to the luminally-oriented cytoplasm of elongated spermatids.

The protein localises to the cell projection. It is found in the cilium. Its subcellular location is the flagellum. It localises to the cytoplasm. The protein resides in the cytoskeleton. The protein localises to the microtubule organizing center. It is found in the centrosome. Its function is as follows. Component of the outer dense fibers (ODF) of spermatozoa. ODF are filamentous structures located on the outside of the axoneme in the midpiece and principal piece of the mammalian sperm tail and may help to maintain the passive elastic structures and elastic recoil of the sperm tail. The protein is Outer dense fiber protein 1 (Odf1) of Rattus norvegicus (Rat).